The primary structure comprises 2531 residues: Probable polyketide synthase 26 (2531 aa).

In terms of domain architecture, Ketosynthase family 3 (KS3) spans 10 to 433 (QEDIAIIGFR…GSNCCLVLTE (424 aa)). Residues C174, H316, and H356 each act as for beta-ketoacyl synthase activity in the active site. Residues 620–653 (GINPSFIVGHSLGELPMAFCSGMIDFDTVCYLLY) are acyl/malonyl transferase. S630 acts as the For acyl/malonyl transferase activity in catalysis. The interval 915–1036 (MDTLGFSNEK…ANYHLSHRDD (122 aa)) is N-terminal hotdog fold. Residues 915-1206 (MDTLGFSNEK…LKSLIPLKDP (292 aa)) enclose the PKS/mFAS DH domain. Residue H948 is the Proton acceptor; for dehydratase activity of the active site. A C-terminal hotdog fold region spans residues 1055–1206 (NLTKLSKNQF…LKSLIPLKDP (152 aa)). D1117 acts as the Proton donor; for dehydratase activity in catalysis. Positions 2431–2509 (ASENPVKDLL…DNIKILTDSY (79 aa)) constitute a Carrier domain. Residue S2468 is modified to O-(pantetheine 4'-phosphoryl)serine.

The cofactor is pantetheine 4'-phosphate.

In terms of biological role, probable polyketide synthase. The polypeptide is Probable polyketide synthase 26 (pks26) (Dictyostelium discoideum (Social amoeba)).